We begin with the raw amino-acid sequence, 432 residues long: Major royal jelly protein 1 (432 aa).

Residues Met1–Gly19 form the signal peptide. Asn28, Asn144, and Asn177 each carry an N-linked (GlcNAc...) asparagine glycan. 3 disulfides stabilise this stretch: Cys118/Cys150, Cys132/Cys195, and Cys329/Cys416. Pro364 is a binding site for 24-methylenecholesterol. His431 is subject to Histidine amide; atypical. At Leu432 the chain carries Leucine amide; atypical.

Belongs to the major royal jelly protein family. Is present in royal jelly in different forms: monomer (55 kDa), oligomeric subunit (ca. 287-420 kDa), and water-insoluble aggregates in sediment after interaction with fatty acids. Component of the apisin heterooligomer complex consisting of 4 copies of MRJP1 and 4 copies of apisimin, associated with 8 molecules of 24-methylenecholesterol; apisimin forms a bridge connecting two MRJP1 dimers. At low pH multiple apisin octamers stack to form filaments that increase the viscosity of royal jelly; these filaments may be stabilized by bound fatty acid chains. The mandibular gland, where royal jelly is produced, has low pH conditions favouring filament formation, while the higher pH of the insect midgut favors filament disassembly. In terms of processing, N-glycosylated on Asn-28, Asn-144 and Asn-177. Glycosylation is required to prevent apisin multimers from aggregating. Jellein-2 is probably processed to yield jellein-1 and jellein-4. In terms of tissue distribution, found in and secreted from the hypopharyngeal glands of the worker honey bee (at protein level); expression peaks at 12 days post eclosion. Expressed in the brains of worker bees (at protein level); found in antennal lobe, optical lobe and a subpopulation of Kenyon cells in the mushroom body. Found in the ommatidia of worker bees (at protein level). Expressed in the spermatheca of adult queen bees (at protein level); expression levels are higher in mated queens than in virgin queens. Expressed in queen bee ovaries and male drone testes.

It is found in the secreted. It localises to the cytoplasm. The protein localises to the cell projection. Its subcellular location is the rhabdomere. The protein resides in the cytoskeleton. Functionally, most abundant protein component of royal jelly, a substance produced in the hypopharyngeal gland containing proteins, free amino acids, fatty acids, sugars and other nutrients, which is fed to developing larvae by worker nurse bees. Major royal jelly proteins (Mrjps) are high in essential amino acids and probably have a nutritional function in larval food. All larvae are fed some royal jelly (also known as worker jelly) early in their development but it forms the principal source of nutrition for larvae destined to become queen bees. Induces the differentiation of honey bee larvae into queens through an Egfr-mediated signaling pathway. Promotes body size increase by activating p70 S6 kinase, stimulates ovary development by augmenting the titer of vitellogenin (Vg) and juvenile hormone, and reduces developmental time by increasing the activity of mitogen-activated protein kinase and inducing 20-hydroxyecdysone (ecdysterone, 20E) production. Together with apisimin forms the apisin complex that polymerizes at low pH, forming a fiber network and increasing the viscosity of royal jelly. The viscous royal Jelly placed in honeycomb cells containing larvae destined to become queens acts as both a food supply and an adhesive preventing larvae from falling out; queens are reared in special large cells oriented vertically. Produced in the spermatheca of adult queen bees, along with other major royal jelly proteins, where it may act as a nutrient supply for sperm stored by mated queens, or be involved in energy metabolism. Its function is as follows. Has antibacterial activity against the Gram-positive bacteria S.aureus ATCC 6535, S.saprophyticus and B.subtilis CCT2471, and the Gram-negative bacteria E.coli CCT1371, E.cloacae ATCC 23355, K.pneumoniae ATCC 13883 and P.aeruginosa ATCC 27853, and antifungal activity against C.albicans. Lack cytolytic activity and does not induce rat peritoneal mast cell degranulation. Lacks antibacterial and antifungal activity. Lacks cytolytic activity and does not induce rat peritoneal mast cell degranulation. The chain is Major royal jelly protein 1 from Apis mellifera (Honeybee).